The primary structure comprises 244 residues: tRNA (guanine-N(7)-)-methyltransferase (244 aa).

Over residues 1 to 11 (MTDTHVPPPEL) the composition is skewed to pro residues. The interval 1 to 23 (MTDTHVPPPELPAAEEGEERPHR) is disordered. Glutamate 74, glutamate 99, aspartate 126, and aspartate 149 together coordinate S-adenosyl-L-methionine. Aspartate 149 is a catalytic residue. Substrate is bound by residues lysine 153, aspartate 185, and 222-225 (TKFE).

The protein belongs to the class I-like SAM-binding methyltransferase superfamily. TrmB family.

The catalysed reaction is guanosine(46) in tRNA + S-adenosyl-L-methionine = N(7)-methylguanosine(46) in tRNA + S-adenosyl-L-homocysteine. Its pathway is tRNA modification; N(7)-methylguanine-tRNA biosynthesis. In terms of biological role, catalyzes the formation of N(7)-methylguanine at position 46 (m7G46) in tRNA. In Pseudomonas syringae pv. tomato (strain ATCC BAA-871 / DC3000), this protein is tRNA (guanine-N(7)-)-methyltransferase.